A 49-amino-acid polypeptide reads, in one-letter code: Defensin Tk-AMP-D2 (49 aa).

4 cysteine pairs are disulfide-bonded: Cys-3–Cys-49, Cys-14–Cys-34, Cys-20–Cys-43, and Cys-24–Cys-45.

Its function is as follows. Plant defense peptide. This chain is Defensin Tk-AMP-D2, found in Triticum kiharae (Wheat).